The primary structure comprises 505 residues: Putative pentatricopeptide repeat-containing protein At1g26500 (505 aa).

PPR repeat units lie at residues 145 to 179, 180 to 210, 214 to 248, 249 to 279, 285 to 319, 320 to 350, and 351 to 385; these read NDKTFRIVLKTLASARELKKCVNYFHLMNGFGYLY, NVETMNRGVETLCKEKLVEEAKFVFIKLKEF, DEITYRTMIQGFCDVGDLIEAAKLWNLMMDEGFDV, DIEAGKKIMETLLKKNQFDEASKVFYVMVSK, DGGFYRVMIDWLCKNGRIDMARKVFDEMRERGVYV, DNLTWASLIYGLLVKRRVVEAYGLVEGVENP, and DISIYHGLIKGLVKIKRASEATEVFRKMIQRGCEP.

This sequence belongs to the PPR family. P subfamily.

In Arabidopsis thaliana (Mouse-ear cress), this protein is Putative pentatricopeptide repeat-containing protein At1g26500.